The following is a 39-amino-acid chain: Cytochrome b6-f complex subunit 5 (39 aa).

Residues 5–25 (LLCGIVLGLVPITLLGLFVSA) form a helical membrane-spanning segment.

Belongs to the PetG family. As to quaternary structure, the 4 large subunits of the cytochrome b6-f complex are cytochrome b6, subunit IV (17 kDa polypeptide, PetD), cytochrome f and the Rieske protein, while the 4 small subunits are PetG, PetL, PetM and PetN. The complex functions as a dimer.

It is found in the cellular thylakoid membrane. In terms of biological role, component of the cytochrome b6-f complex, which mediates electron transfer between photosystem II (PSII) and photosystem I (PSI), cyclic electron flow around PSI, and state transitions. PetG is required for either the stability or assembly of the cytochrome b6-f complex. This is Cytochrome b6-f complex subunit 5 from Prochlorococcus marinus subsp. pastoris (strain CCMP1986 / NIES-2087 / MED4).